The primary structure comprises 234 residues: Ubiquinone biosynthesis O-methyltransferase (234 aa).

S-adenosyl-L-methionine contacts are provided by Arg-39, Gly-59, Asp-80, and Met-124.

The protein belongs to the methyltransferase superfamily. UbiG/COQ3 family.

It catalyses the reaction a 3-demethylubiquinol + S-adenosyl-L-methionine = a ubiquinol + S-adenosyl-L-homocysteine + H(+). It carries out the reaction a 3-(all-trans-polyprenyl)benzene-1,2-diol + S-adenosyl-L-methionine = a 2-methoxy-6-(all-trans-polyprenyl)phenol + S-adenosyl-L-homocysteine + H(+). Its pathway is cofactor biosynthesis; ubiquinone biosynthesis. In terms of biological role, O-methyltransferase that catalyzes the 2 O-methylation steps in the ubiquinone biosynthetic pathway. The chain is Ubiquinone biosynthesis O-methyltransferase from Aliivibrio fischeri (strain MJ11) (Vibrio fischeri).